We begin with the raw amino-acid sequence, 198 residues long: Nucleoid occlusion factor SlmA (198 aa).

The HTH tetR-type domain maps to 9-70 (RNRREEILQA…SLIEFIEDTL (62 aa)). The H-T-H motif DNA-binding region spans 33–52 (TTAKLAANVGVSEAALYRHF). Positions 117–144 (EQDRLQGRINQLFERIEAQLRQVLKERR) form a coiled coil.

Belongs to the nucleoid occlusion factor SlmA family. In terms of assembly, homodimer. Interacts with FtsZ.

It is found in the cytoplasm. Its subcellular location is the nucleoid. In terms of biological role, required for nucleoid occlusion (NO) phenomenon, which prevents Z-ring formation and cell division over the nucleoid. Acts as a DNA-associated cell division inhibitor that binds simultaneously chromosomal DNA and FtsZ, and disrupts the assembly of FtsZ polymers. SlmA-DNA-binding sequences (SBS) are dispersed on non-Ter regions of the chromosome, preventing FtsZ polymerization at these regions. This chain is Nucleoid occlusion factor SlmA, found in Edwardsiella ictaluri (strain 93-146).